Reading from the N-terminus, the 223-residue chain is Ribose-5-phosphate isomerase A (223 aa).

Substrate is bound by residues 32–35 (TGST), 83–86 (DGAD), and 96–99 (KGGG). The active-site Proton acceptor is the glutamate 105. Substrate is bound at residue lysine 123.

The protein belongs to the ribose 5-phosphate isomerase family. As to quaternary structure, homodimer.

It carries out the reaction aldehydo-D-ribose 5-phosphate = D-ribulose 5-phosphate. It functions in the pathway carbohydrate degradation; pentose phosphate pathway; D-ribose 5-phosphate from D-ribulose 5-phosphate (non-oxidative stage): step 1/1. Catalyzes the reversible conversion of ribose-5-phosphate to ribulose 5-phosphate. The chain is Ribose-5-phosphate isomerase A from Acinetobacter baumannii (strain AYE).